The chain runs to 263 residues: Serine protease ami (263 aa).

A signal peptide spans 1–21 (MNISRVLFAVVLVLTVSTYEC). A glycan (N-linked (GlcNAc...) asparagine) is linked at Asn-2. Positions 22 to 26 (RPRGR) are cleaved as a propeptide — activation peptide. A Peptidase S1 domain is found at 27–254 (ILGGQDSKEK…YKSWIMETMY (228 aa)). Cys-52 and Cys-68 are joined by a disulfide. Residue His-67 is the Charge relay system of the active site. 3 N-linked (GlcNAc...) asparagine glycosylation sites follow: Asn-73, Asn-74, and Asn-108. Asp-115 functions as the Charge relay system in the catalytic mechanism. 3 disulfide bridges follow: Cys-149-Cys-215, Cys-180-Cys-196, and Cys-205-Cys-230. The active-site Charge relay system is the Ser-209. Asn-255 is a glycosylation site (N-linked (GlcNAc...) asparagine).

This sequence belongs to the peptidase S1 family. In terms of tissue distribution, in the embryo, localizes to paraxial regions at the neurula stage and anterior ventral regions at the tailbud stage. From the late tailbud to tadpole stage, expressed along the forming blood vessels including the anterior cardinal veins, posterior cardinal veins, intersomitic veins, dorsal longitudinal anastomosing vessel, dorsal aorta, pronephric sinus and most prominently around the vascular vitelline network, where expression shows left-right asymmetry in the stage 42 embryo. Localizes to endothelial cells. In adults, shows highest expression in liver with moderate levels of expression in the fat body, lung, gut and vessels. Weakly expressed in adult heart, muscle, testis and ovary.

It localises to the secreted. In terms of biological role, probable serine protease. The chain is Serine protease ami from Xenopus laevis (African clawed frog).